Consider the following 437-residue polypeptide: Eukaryotic peptide chain release factor subunit 1 (437 aa).

The NIKS motif; plays an important role in translational termination motif lies at 61-64 (NIKS).

The protein belongs to the eukaryotic release factor 1 family. In terms of assembly, component of the eRF1-eRF3-GTP ternary complex, composed of ETF1/ERF1 and eRF3 (GSPT1/ERF3A or GSPT2/ERF3B) and GTP.

Its subcellular location is the cytoplasm. In terms of biological role, component of the eRF1-eRF3-GTP ternary complex, a ternary complex that mediates translation termination in response to the termination codons. The eRF1-eRF3-GTP complex binds to a stop codon in the ribosomal A-site. ETF1/ERF1 is responsible for stop codon recognition and inducing hydrolysis of peptidyl-tRNA. Following GTP hydrolysis, eRF3 (GSPT1/ERF3A or GSPT2/ERF3B) dissociates, permitting ETF1/eRF1 to accommodate fully in the A-site, followed by hydrolysis of peptidyl-tRNA. The polypeptide is Eukaryotic peptide chain release factor subunit 1 (etf1) (Xenopus tropicalis (Western clawed frog)).